We begin with the raw amino-acid sequence, 938 residues long: MSDYKKTLHLPDTKFPMKANLTQREPEMLKFWEGIDAYAAMAQASGQKGQYVLHDGPPYANGHIHLGTALNKILKDMVVKSRNMQGYAARYVPGWDCHGLPIEHKVEQELGEKKKELPAHVVRKRCRQYAEKYLDIQRKEFKRLGVLGAWDKPYMTMDPAYESATARELGNFVAAGNVVRSKKPIYWCCSCQTALAEAEVEYYDHTSPSIFVRFPLRDPKVADVLNVDPASAWIVIWTTTPWTLPDNMAVAVHPDHDYAVVRHDGAHYVLAAALVESSAKTFGWENCEVVSTVPGAKLEGLVATHPFYDRPSPVVLADYVVLDSGTGCVHTAPGHGREDYETGLRYGLEILSPLNDEGRFLDSVPFFAGLTVFEANPKVIEKLREVGNLLAERKISHSYPHCWRCKKPVIFRATTQWFIAMEKNDLRARALSAIRNDVRWIPAWGEERIHNMIEFRPDWCISRQRTWGVPIIALLCEGCGEAWNDAAWMRDIADRFAKHPTGCDYWYETPLEGIVPAGLACPHCGGNHWKKETDILDVWFDSGTSFSAVLEQRGDTAFPADLYLEGSDQHRGWFHSSLLASMGTRGVPPYRAVLTHGYVVDGEGRKMSKSIGNVIAPQEIIDKYGAEILRLWVASVDYREDIRISDEILSRLVDAYRRIRNTCRYLLGNIDDLTPEEIVPFSVMDPLDRYALDIVTDAHARIQEAYSEFEFHKVFHTLHNLCVTDLSAFYLDVLKDRLYASAKDSPERRSAQTALLHILLVLVRDMAPVLSFTAEEVFRHIPEALRPAAATVFALRGSDTPLYNVSSDESERWEAVLAVRSEVTKAIEPLRKAGTVGHSLDTHVTLYADHKLADLLRATGTDLRAVFIVSKLNIAPLEDAPQDAFASDEVKGLRIGVAKAPGAKCERCWIYHEELGADPGYPGACARCTTVLRTSGAE.

The 'HIGH' region signature appears at 58-68; it reads PYANGHIHLGT. Glu565 is a binding site for L-isoleucyl-5'-AMP. The 'KMSKS' region motif lies at 606–610; that stretch reads KMSKS. Position 609 (Lys609) interacts with ATP. Zn(2+) contacts are provided by Cys905, Cys908, Cys925, and Cys928.

This sequence belongs to the class-I aminoacyl-tRNA synthetase family. IleS type 1 subfamily. Monomer. It depends on Zn(2+) as a cofactor.

The protein localises to the cytoplasm. The catalysed reaction is tRNA(Ile) + L-isoleucine + ATP = L-isoleucyl-tRNA(Ile) + AMP + diphosphate. In terms of biological role, catalyzes the attachment of isoleucine to tRNA(Ile). As IleRS can inadvertently accommodate and process structurally similar amino acids such as valine, to avoid such errors it has two additional distinct tRNA(Ile)-dependent editing activities. One activity is designated as 'pretransfer' editing and involves the hydrolysis of activated Val-AMP. The other activity is designated 'posttransfer' editing and involves deacylation of mischarged Val-tRNA(Ile). The protein is Isoleucine--tRNA ligase of Nitratidesulfovibrio vulgaris (strain DSM 19637 / Miyazaki F) (Desulfovibrio vulgaris).